We begin with the raw amino-acid sequence, 383 residues long: Forkhead box protein I3-B (383 aa).

Residues Met-1–Thr-12 show a composition bias toward polar residues. 3 disordered regions span residues Met-1–Gly-55, Asp-215–Ser-277, and Thr-317–His-348. Over residues Pro-25 to Tyr-35 the composition is skewed to low complexity. The segment at residues Arg-130–Lys-224 is a DNA-binding region (fork-head). The Nuclear localization signal motif lies at Arg-220 to Lys-226. Low complexity predominate over residues Ser-234–Ser-249. A compositionally biased stretch (polar residues) spans Pro-250 to Ser-277. The span at Thr-317 to Ser-330 shows a compositional bias: low complexity.

Expressed in ionocyte precursors.

The protein resides in the nucleus. Its function is as follows. Transcription factor required for epithelial cell differentiation. Involved in specification of skin ionocytes from epidermal precursors. The chain is Forkhead box protein I3-B from Danio rerio (Zebrafish).